A 298-amino-acid chain; its full sequence is Glycine--tRNA ligase alpha subunit (298 aa).

This sequence belongs to the class-II aminoacyl-tRNA synthetase family. In terms of assembly, tetramer of two alpha and two beta subunits.

Its subcellular location is the cytoplasm. The enzyme catalyses tRNA(Gly) + glycine + ATP = glycyl-tRNA(Gly) + AMP + diphosphate. This is Glycine--tRNA ligase alpha subunit from Gloeothece citriformis (strain PCC 7424) (Cyanothece sp. (strain PCC 7424)).